The sequence spans 411 residues: Lissencephaly-1 homolog (411 aa).

A LisH domain is found at 9 to 41 (QREELNQAIADYLGSNGYADSLETFRKEADLST). Residues 56–83 (TSVIRLQKKVMELEAKLTEAEKEVIEGA) adopt a coiled-coil conformation. WD repeat units lie at residues 106 to 147 (GHRA…RSLK), 148 to 187 (GHTD…ECIK), 191 to 230 (GHDH…CVKT), 233 to 272 (GHRE…CKVE), 275 to 334 (DHEH…CLLT), 337 to 376 (GHDN…CMKT), and 379 to 411 (AHQH…WECR).

Belongs to the WD repeat LIS1/nudF family.

The protein localises to the cytoplasm. The protein resides in the cytoskeleton. Its subcellular location is the microtubule organizing center. It localises to the centrosome. Its function is as follows. Positively regulates the activity of the minus-end directed microtubule motor protein dynein. May enhance dynein-mediated microtubule sliding by targeting dynein to the microtubule plus end. Required for several dynein- and microtubule-dependent processes. In Drosophila sechellia (Fruit fly), this protein is Lissencephaly-1 homolog.